A 556-amino-acid chain; its full sequence is Formate--tetrahydrofolate ligase (556 aa).

Residue 65–72 (TPAGEGKT) coordinates ATP.

The protein belongs to the formate--tetrahydrofolate ligase family.

It carries out the reaction (6S)-5,6,7,8-tetrahydrofolate + formate + ATP = (6R)-10-formyltetrahydrofolate + ADP + phosphate. It functions in the pathway one-carbon metabolism; tetrahydrofolate interconversion. This chain is Formate--tetrahydrofolate ligase, found in Acetivibrio thermocellus (strain ATCC 27405 / DSM 1237 / JCM 9322 / NBRC 103400 / NCIMB 10682 / NRRL B-4536 / VPI 7372) (Clostridium thermocellum).